The chain runs to 161 residues: Blue copper protein 1a (161 aa).

Positions 1–23 are cleaved as a signal peptide; it reads MASSRVVLILSISMVLLSSVAIA. Residues 24 to 124 enclose the Phytocyanin domain; it reads TDHIVGDDKG…QMKLVITVLA (101 aa). Histidine 64 is a Cu cation binding site. Asparagine 70 is a glycosylation site (N-linked (GlcNAc...) asparagine). Cysteine 77 and cysteine 111 are disulfide-bonded. Cu cation is bound by residues cysteine 105, histidine 110, and methionine 116. A helical transmembrane segment spans residues 141-161; sequence VVSSLFGVVMAIMVAIAVIFA.

It is found in the membrane. This is Blue copper protein 1a from Medicago truncatula (Barrel medic).